The following is a 439-amino-acid chain: Probable eukaryotic translation initiation factor 5-1 (439 aa).

29-36 (GRGNGIKT) serves as a coordination point for GTP. A disordered region spans residues 143–245 (LKNPPEQKKS…REAAEKRMKE (103 aa)). Residues 147 to 186 (PEQKKSSKDKKSMRRAEKERLREGEAADEEMRKLKKEAAS) are compositionally biased toward basic and acidic residues. Over residues 214 to 228 (DENDQADSEEDDDDV) the composition is skewed to acidic residues. Thr232 carries the post-translational modification Phosphothreonine. Residues 234 to 245 (TSREAAEKRMKE) are compositionally biased toward basic and acidic residues. One can recognise a W2 domain in the interval 283–439 (KIPENAHEKL…QNAESESEEE (157 aa)). A phosphoserine mark is found at Ser434 and Ser436.

Belongs to the eIF-2-beta/eIF-5 family.

Catalyzes the hydrolysis of GTP bound to the 40S ribosomal initiation complex (40S.mRNA.Met-tRNA[F].eIF-2.GTP) with the subsequent joining of a 60S ribosomal subunit resulting in the release of eIF-2 and the guanine nucleotide. The subsequent joining of a 60S ribosomal subunit results in the formation of a functional 80S initiation complex (80S.mRNA.Met-tRNA[F]). The chain is Probable eukaryotic translation initiation factor 5-1 from Arabidopsis thaliana (Mouse-ear cress).